Reading from the N-terminus, the 228-residue chain is uncharacterized protein (228 aa).

In terms of domain architecture, HTH gntR-type spans 11-78 (PPVNQQIYRI…PQRGSYVNKI (68 aa)). Residues 38–57 (EKEVSVRFNVSRQPVREAFI) constitute a DNA-binding region (H-T-H motif).

This is an uncharacterized protein from Escherichia coli O6:H1 (strain CFT073 / ATCC 700928 / UPEC).